A 655-amino-acid polypeptide reads, in one-letter code: Polycyclic ketone monooxygenase (655 aa).

The FAD site is built by glycine 89, aspartate 113, alanine 114, threonine 121, tryptophan 124, cysteine 132, aspartate 133, tyrosine 139, and valine 183. The NADPH site is built by threonine 277, threonine 280, threonine 301, lysine 425, and valine 452. A disulfide bridge connects residues cysteine 424 and cysteine 596. FAD is bound by residues threonine 492 and asparagine 541. Tyrosine 600 contacts NADPH.

It belongs to the FAD-binding monooxygenase family. FAD serves as cofactor.

Polycyclic ketone monooxygenase (PockeMO) that displays excellent enantioselectivity, acts on various ketones, and is particularly active on polycyclic molecules. Breaks C-C bonds through the insertion of a single oxygen atom adjacent to a carbonyl moiety, yielding esters or lactones from ketones. PockeMO is able to convert linear ketones (including cyclohexane and to a lesser extend 4-octanone), cyclic ketones (including cyclohexanone and cyclooctanone), bicyclic ketones and polycyclic ketones (steroids). Performs oxidation of the keto functionalities at both the A and D rings of steroids. Particularly, oxidizes the A ring of stanolone or pregnenolone. Selectively oxidizes the D ring of androstenedione or androstadienedione, steroids with keto groups in both the A and D rings, to yield the pharmaceutically relevant testo(lo)lactone. The polypeptide is Polycyclic ketone monooxygenase (Thermothelomyces thermophilus (strain ATCC 42464 / BCRC 31852 / DSM 1799) (Sporotrichum thermophile)).